Here is a 298-residue protein sequence, read N- to C-terminus: Single myb histone 2 (298 aa).

Residues 1–61 (MGVPKQRWTP…KWRNLSVTAG (61 aa)) enclose the HTH myb-type domain. A DNA-binding region (H-T-H motif) is located at residues 28 to 57 (WRTILRDSDFSALLRLRSNVDLKDKWRNLS). Positions 124 to 192 (SVARLDDLIV…KVNQKYRIAP (69 aa)) constitute an H15 domain. A coiled-coil region spans residues 237–278 (EEAAAFAAKAVAEAEVAMAEAEEAARVAEAAENDAEAAKAFL).

This sequence belongs to the histone H1/H5 family. SMH subfamily. Forms a homodimer and heterodimers.

The protein localises to the nucleus. The protein resides in the chromosome. It localises to the nucleolus. It is found in the telomere. Binds preferentially double-stranded telomeric repeats, but may also bind to the single telomeric strand. The polypeptide is Single myb histone 2 (SMH2) (Zea mays (Maize)).